We begin with the raw amino-acid sequence, 85 residues long: ATP synthase subunit c (85 aa).

2 helical membrane-spanning segments follow: residues 10–30 (IAVA…FAVL) and 53–73 (FIIA…ALLF).

Belongs to the ATPase C chain family. As to quaternary structure, F-type ATPases have 2 components, F(1) - the catalytic core - and F(0) - the membrane proton channel. F(1) has five subunits: alpha(3), beta(3), gamma(1), delta(1), epsilon(1). F(0) has three main subunits: a(1), b(2) and c(10-14). The alpha and beta chains form an alternating ring which encloses part of the gamma chain. F(1) is attached to F(0) by a central stalk formed by the gamma and epsilon chains, while a peripheral stalk is formed by the delta and b chains.

It is found in the cell inner membrane. F(1)F(0) ATP synthase produces ATP from ADP in the presence of a proton or sodium gradient. F-type ATPases consist of two structural domains, F(1) containing the extramembraneous catalytic core and F(0) containing the membrane proton channel, linked together by a central stalk and a peripheral stalk. During catalysis, ATP synthesis in the catalytic domain of F(1) is coupled via a rotary mechanism of the central stalk subunits to proton translocation. In terms of biological role, key component of the F(0) channel; it plays a direct role in translocation across the membrane. A homomeric c-ring of between 10-14 subunits forms the central stalk rotor element with the F(1) delta and epsilon subunits. In Vibrio cholerae serotype O1 (strain ATCC 39315 / El Tor Inaba N16961), this protein is ATP synthase subunit c.